The primary structure comprises 418 residues: Thyroid hormone receptor alpha-B (418 aa).

A disordered region spans residues 1–40 (MDQNLSGLDCLSEPDEKRWPDGKRKRKNSQCMGKSGMSGD). The tract at residues 1–60 (MDQNLSGLDCLSEPDEKRWPDGKRKRKNSQCMGKSGMSGDSLVSLPPAGYIPSYLDKDEP) is modulating. 2 consecutive NR C4-type zinc fingers follow at residues 61–81 (CVVC…CEGC) and 99–123 (CKYD…FKKC). The nuclear receptor DNA-binding region spans 61–128 (CVVCSDKATG…RFKKCIAVGM (68 aa)). One can recognise an NR LBD domain in the interval 171 to 415 (EEWELIRIVT…PPLFLEVFED (245 aa)).

Belongs to the nuclear hormone receptor family. NR1 subfamily. In terms of assembly, binds to thyroid hormone receptor element (TRE) weakly as homodimers and monomers, but binds TRE with much higher affinity as heterodimers with retinoid X receptors. Can bind DNA as a heterodimer with either rxra or rxrg.

Its subcellular location is the nucleus. Functionally, high affinity receptor for triiodothyronine (T3). In Xenopus laevis (African clawed frog), this protein is Thyroid hormone receptor alpha-B (thra-b).